The chain runs to 122 residues: Serum amyloid A-3 protein (122 aa).

The first 18 residues, 1–18 (MKLSIGIIFCFLILGVNS), serve as a signal peptide directing secretion. Positions 88 to 122 (GRGAEDSKADQEANQWGRSGNDPNHFRPKGLPDKY) are disordered. Positions 99 to 109 (EANQWGRSGND) are enriched in polar residues.

This sequence belongs to the SAA family. In terms of tissue distribution, expressed by the liver; secreted in plasma. Expressed in synovial fibroblasts.

It localises to the secreted. Functionally, major acute phase reactant. Apolipoprotein of the HDL complex. In vitro exhibits antimicrobial activity against Escherichia coli, Streptococcus uberis and Pseudomonas aeruginosa. In Oryctolagus cuniculus (Rabbit), this protein is Serum amyloid A-3 protein (SAA3).